The following is a 367-amino-acid chain: MKEVPKEPKKLREGYTTGACATAATRAALLTLISGEVQDESTIYLPVGRFATFHLEECEYRTSSAVASIIKDAGDDPDATHGALIISEVSWCNGVDIIIDGGVGVGRVTKPGLPVPVGEAAINPVPRKMLKETAQQLLAEYNIQKGVKVVISVPEGEEMAKKTLNARLGILGGISILGTRGIVVPFSTAAYKASIVQAISVAKASNCEHVVITTGGRSEKYGMKQFPELPEEAFIQMGDFVGFTLKQCKKQGMKKVSLVGMMGKFSKVAQGVMMVHSKSAPIDFNFLAKAASESGASAELVEEIKGANTASQVGDLMTQSGHHQFFEKLCEYCCLSALKEVGDGIDVDTSLYTLKGDFLGQAVQHGN.

It belongs to the CbiD family.

It catalyses the reaction Co-precorrin-5B + S-adenosyl-L-methionine = Co-precorrin-6A + S-adenosyl-L-homocysteine. It functions in the pathway cofactor biosynthesis; adenosylcobalamin biosynthesis; cob(II)yrinate a,c-diamide from sirohydrochlorin (anaerobic route): step 6/10. Functionally, catalyzes the methylation of C-1 in cobalt-precorrin-5B to form cobalt-precorrin-6A. This chain is Cobalt-precorrin-5B C(1)-methyltransferase, found in Priestia megaterium (Bacillus megaterium).